The following is a 115-amino-acid chain: Synaptobrevin homolog 2 (115 aa).

Over residues Met-1–Ser-16 the composition is skewed to low complexity. The segment at Met-1–Thr-28 is disordered. The Cytoplasmic segment spans residues Met-1–Met-93. Residues Asn-17–Thr-28 are compositionally biased toward polar residues. Residues Lys-27–Lys-87 enclose the v-SNARE coiled-coil homology domain. At Ser-58 the chain carries Phosphoserine. Residue Lys-62 forms a Glycyl lysine isopeptide (Lys-Gly) (interchain with G-Cter in ubiquitin) linkage. Cys-94 is lipidated: S-palmitoyl cysteine. The chain crosses the membrane as a helical; Anchor for type IV membrane protein span at residues Cys-94 to Val-112. Residues His-113 to Ser-115 are Vesicular-facing.

The protein belongs to the synaptobrevin family. Palmitoylated by SWF1.

The protein resides in the endomembrane system. Functionally, SNC1 and SNC2 are vesicle-targeting proteins essential for normal secretory traffic between the Golgi and the plasma membrane. They may also be involved in vesicle fusion. In Saccharomyces cerevisiae (strain ATCC 204508 / S288c) (Baker's yeast), this protein is Synaptobrevin homolog 2 (SNC2).